The chain runs to 263 residues: ATP synthase subunit a (263 aa).

5 helical membrane passes run 31-51, 89-109, 133-153, 205-225, and 235-255; these read LDTLFFSILLGCSFCWLFYSI, IGSLALTLFCWIFFWNVMDLI, DPNATFALSISVVLITLVYTF, LFGNLFAGEIVFILITFLPFW, and AIFHILVVTLQAYVFMILTIV.

It belongs to the ATPase A chain family. In terms of assembly, F-type ATPases have 2 components, CF(1) - the catalytic core - and CF(0) - the membrane proton channel. CF(1) has five subunits: alpha(3), beta(3), gamma(1), delta(1), epsilon(1). CF(0) has three main subunits: a(1), b(2) and c(9-12). The alpha and beta chains form an alternating ring which encloses part of the gamma chain. CF(1) is attached to CF(0) by a central stalk formed by the gamma and epsilon chains, while a peripheral stalk is formed by the delta and b chains.

It is found in the cell inner membrane. Its function is as follows. Key component of the proton channel; it plays a direct role in the translocation of protons across the membrane. The chain is ATP synthase subunit a from Dichelobacter nodosus (strain VCS1703A).